Reading from the N-terminus, the 513-residue chain is ATP synthase subunit alpha (513 aa).

169–176 lines the ATP pocket; that stretch reads GDRQTGKT.

This sequence belongs to the ATPase alpha/beta chains family. In terms of assembly, F-type ATPases have 2 components, CF(1) - the catalytic core - and CF(0) - the membrane proton channel. CF(1) has five subunits: alpha(3), beta(3), gamma(1), delta(1), epsilon(1). CF(0) has three main subunits: a(1), b(2) and c(9-12). The alpha and beta chains form an alternating ring which encloses part of the gamma chain. CF(1) is attached to CF(0) by a central stalk formed by the gamma and epsilon chains, while a peripheral stalk is formed by the delta and b chains.

It localises to the cell inner membrane. It catalyses the reaction ATP + H2O + 4 H(+)(in) = ADP + phosphate + 5 H(+)(out). Its function is as follows. Produces ATP from ADP in the presence of a proton gradient across the membrane. The alpha chain is a regulatory subunit. The polypeptide is ATP synthase subunit alpha (Ruthia magnifica subsp. Calyptogena magnifica).